The chain runs to 1024 residues: MDLAKFLCWIVLLLGISLVESRYMVYNTSHTIVPGKLNVHVVPHSHDDVGWLKTVDQYYVGSNNSIQVACVQNVLDSIVPALLADKNRKFIYVEQAFFQRWWNEQSEEIKRIVKELIHSGQLELINGGMCMHDEAAPHYIDMIDQTTLGHRFIIREFNVTPRIGWQIDPFGHSAVQAYLLGAEVGFDSVFFGRIDYQDREKRYKEKTLEVIWRGSKSLGSSSQIFAGAFPTNYEPPPGGFYYEITDDSPVVQDDPDLFDYNVQERVNAFVAAALDQANITRINHIMFTMGTDFRYQYAHTWYRQMDKLIHYVNLDGRVNAFYSTPSIYTDAKHAANEAWPLKTEDYFPYADRINAYWTGYFTSRPALKRYVRVMSAYYLAARQLEFFKGRSQKGPNTDSLADALAIAQHHDAVSGTSKQHVANDYAKRLAIGYVEAESVVATSLAHLTKVDPTLNPTFQQCLLLNISYCPSSEVNLSDGKSLIVLAYNPLGWKRVDIVRLPVVGGDVSVHDSEGHEVESQLVPFTDEYVALRKYHVEAYLGQSPTQVPKYWLVFSVTVPPLGFTTYTISTAKKTDGYSSKSYVSNILKGEQSIINIGHGHLKLSFSTDQGTAINYVNGRTSMTEPVKQTFSYYSAYNGSNDKEPLIPQNSGAYVFRPNGTFPINPEGQVPLTVIHGPLVDEVHQQINPWISQITRVYKGKEHVEVEFIVGNIPIDDGIGKEVVTQISSSLKSNKTFYTDSSGRDYIKRIRDYRSDWKLDVNQPIAGNYYPINHGIYLQDSKKEFSVMVDRAFGGSSIVDGQVELMLHRRLLLDDSRGVAENLNETVCVQDKCTGLTIQGKYYYRIDPYGEGAKWRRTFGQEIYSPLLLAFAQQDDGKPMSFGAASFSGIDPSYSLPDNVALLTLQELDDGNVLLRLAHLYEVEEDKELSGVASVELKKLFPGKKIGKLTEMSLSANQERSTMEKKRLVWKVEGEGSYGEEKKAKRGREIDPRKLEMELYPMEIRTVLIHLELPSSHSRINRFDA.

An N-terminal signal peptide occupies residues 1 to 21; it reads MDLAKFLCWIVLLLGISLVES. Asn27 carries N-linked (GlcNAc...) asparagine glycosylation. Zn(2+)-binding residues include His46 and Asp48. Residue Asn63 is glycosylated (N-linked (GlcNAc...) asparagine). Asp168 contacts Zn(2+). A glycan (N-linked (GlcNAc...) asparagine) is linked at Asn278. His410 is a Zn(2+) binding site. Cysteines 461 and 469 form a disulfide. N-linked (GlcNAc...) asparagine glycans are attached at residues Asn465, Asn475, Asn637, Asn658, Asn733, and Asn823. An intrachain disulfide couples Cys827 to Cys832.

Belongs to the glycosyl hydrolase 38 family. As to quaternary structure, homodimer. Requires Zn(2+) as cofactor.

The enzyme catalyses Hydrolysis of terminal, non-reducing alpha-D-mannose residues in alpha-D-mannosides.. In terms of biological role, liberates mannose from p-nitrophenyl-alpha-D-mannoside in vitro. The chain is Probable alpha-mannosidase At5g13980 from Arabidopsis thaliana (Mouse-ear cress).